A 144-amino-acid chain; its full sequence is MNFKYIVAVSFLIASAYARSVQNDEQSLSQRDVLEEESLREIRSIGAKILGGVKTFFKGALKELASTYLQRKRTAEDHEEMKRLEAVMRDLDSLDYPEEASERETRGFNQEEIANLFTKKEKRILGPVISKIGGVLGGLLKNLG.

A signal peptide spans 1–18 (MNFKYIVAVSFLIASAYA). 2 propeptides span residues 19–43 (RSVQ…REIR) and 74–123 (TAED…KEKR). Leu-143 bears the Leucine amide mark.

This sequence belongs to the bombinin family. In terms of tissue distribution, expressed by the skin glands.

The protein localises to the secreted. Functionally, maximin-5 shows antibacterial activity against both Gram-positive and Gram-negative bacteria. The only exception is the resistance of E.coli. Also shows antimicrobial activity against fungi C.albicans, A.flavus and P.uticale. It has little hemolytic activity. It does not possess a significant cytotoxicity against tumor cell lines. It does not possess a significant anti-HIV activity. Maximin-H4 shows antibacterial activity against both Gram-positive and Gram-negative bacteria. It also shows antimicrobial activity against the fungus C.albicans. Shows strong hemolytic activity. In Bombina maxima (Giant fire-bellied toad), this protein is Maximins 5/H4 type 3.